The chain runs to 485 residues: Rhamnulokinase (485 aa).

12 to 16 (ATSGR) lines the ATP pocket. Substrate contacts are provided by residues Gly80 and 238 to 240 (HDT). Asp239 serves as the catalytic Proton acceptor. Residue Thr261 participates in ATP binding. Asn298 contacts substrate. Residue Glu306 participates in ATP binding. A disulfide bridge connects residues Cys355 and Cys372. Residue Gly404 participates in ATP binding.

Belongs to the rhamnulokinase family. Mg(2+) serves as cofactor.

It carries out the reaction L-rhamnulose + ATP = L-rhamnulose 1-phosphate + ADP + H(+). It functions in the pathway carbohydrate degradation; L-rhamnose degradation; glycerone phosphate from L-rhamnose: step 2/3. Involved in the catabolism of L-rhamnose (6-deoxy-L-mannose). Catalyzes the transfer of the gamma-phosphate group from ATP to the 1-hydroxyl group of L-rhamnulose to yield L-rhamnulose 1-phosphate. In Bacteroides thetaiotaomicron (strain ATCC 29148 / DSM 2079 / JCM 5827 / CCUG 10774 / NCTC 10582 / VPI-5482 / E50), this protein is Rhamnulokinase.